A 383-amino-acid polypeptide reads, in one-letter code: S-adenosylmethionine synthase 1 (383 aa).

H15 lines the ATP pocket. D17 contacts Mg(2+). Position 43 (E43) interacts with K(+). L-methionine contacts are provided by E56 and Q99. The interval 99–109 (QSPDIDLGVSR) is flexible loop. ATP-binding positions include 162-164 (DGK), 228-229 (RF), D237, 243-244 (RK), A260, and K264. D237 lines the L-methionine pocket. An L-methionine-binding site is contributed by K268.

It belongs to the AdoMet synthase family. Homotetramer; dimer of dimers. Requires Mg(2+) as cofactor. K(+) is required as a cofactor.

It localises to the cytoplasm. It carries out the reaction L-methionine + ATP + H2O = S-adenosyl-L-methionine + phosphate + diphosphate. Its pathway is amino-acid biosynthesis; S-adenosyl-L-methionine biosynthesis; S-adenosyl-L-methionine from L-methionine: step 1/1. Its function is as follows. Catalyzes the formation of S-adenosylmethionine (AdoMet) from methionine and ATP. The overall synthetic reaction is composed of two sequential steps, AdoMet formation and the subsequent tripolyphosphate hydrolysis which occurs prior to release of AdoMet from the enzyme. This Rhodospirillum rubrum (strain ATCC 11170 / ATH 1.1.1 / DSM 467 / LMG 4362 / NCIMB 8255 / S1) protein is S-adenosylmethionine synthase 1.